Consider the following 207-residue polypeptide: Small ribosomal subunit protein uS4c (207 aa).

The region spanning 92-156 (MRLDNILFRL…YQSIITKRIE (65 aa)) is the S4 RNA-binding domain.

It belongs to the universal ribosomal protein uS4 family. In terms of assembly, part of the 30S ribosomal subunit. Contacts protein S5. The interaction surface between S4 and S5 is involved in control of translational fidelity.

The protein resides in the plastid. The protein localises to the chloroplast. Its function is as follows. One of the primary rRNA binding proteins, it binds directly to 16S rRNA where it nucleates assembly of the body of the 30S subunit. With S5 and S12 plays an important role in translational accuracy. This chain is Small ribosomal subunit protein uS4c (rps4), found in Equisetum palustre (Marsh horsetail).